The sequence spans 86 residues: MANIKSQVKRIRTNEAARLRNQSVKSSLRTAIRSFREAAAAGDKDKANELLVSTSRKLDKAASKGVIHANQAANKKSALSQAANKL.

It belongs to the bacterial ribosomal protein bS20 family.

Its function is as follows. Binds directly to 16S ribosomal RNA. This is Small ribosomal subunit protein bS20 from Rhodococcus erythropolis (strain PR4 / NBRC 100887).